Consider the following 119-residue polypeptide: Large ribosomal subunit protein bL19c (119 aa).

Belongs to the bacterial ribosomal protein bL19 family.

The protein resides in the plastid. It is found in the chloroplast. The protein is Large ribosomal subunit protein bL19c of Mesostigma viride (Green alga).